A 427-amino-acid polypeptide reads, in one-letter code: Serine hydroxymethyltransferase (427 aa).

120–122 (GHI) lines the (6S)-5,6,7,8-tetrahydrofolate pocket. Lys226 is modified (N6-(pyridoxal phosphate)lysine).

Belongs to the SHMT family. Homodimer. Pyridoxal 5'-phosphate serves as cofactor.

The protein resides in the cytoplasm. It functions in the pathway amino-acid biosynthesis; glycine biosynthesis; glycine from L-serine: step 1/1. Its function is as follows. Catalyzes the reversible interconversion of serine and glycine with a modified folate serving as the one-carbon carrier. Also exhibits a pteridine-independent aldolase activity toward beta-hydroxyamino acids, producing glycine and aldehydes, via a retro-aldol mechanism. In Pyrococcus horikoshii (strain ATCC 700860 / DSM 12428 / JCM 9974 / NBRC 100139 / OT-3), this protein is Serine hydroxymethyltransferase.